The chain runs to 85 residues: CDC42 small effector protein 2 (85 aa).

2 S-palmitoyl cysteine lipidation sites follow: Cys-10 and Cys-11. One can recognise a CRIB domain in the interval 29 to 42 (IGEPTNFVHTAHVG).

It belongs to the CDC42SE/SPEC family.

The protein resides in the cytoplasm. It localises to the cytoskeleton. It is found in the cell membrane. Probably involved in the organization of the actin cytoskeleton by acting downstream of CDC42, inducing actin filament assembly. The chain is CDC42 small effector protein 2 (cdc42se2) from Danio rerio (Zebrafish).